The following is a 426-amino-acid chain: Putative acid phosphatase 1 (426 aa).

The first 18 residues, 1-18, serve as a signal peptide directing secretion; sequence MRVLFYVSILVIIASVHT. The Extracellular portion of the chain corresponds to 19–388; sequence QLISVHVIFR…SEWVMTPLSW (370 aa). The active-site Nucleophile is the His29. N-linked (GlcNAc...) asparagine glycans are attached at residues Asn37 and Asn145. Cysteines 133 and 369 form a disulfide. Residue Asp276 is the Proton donor of the active site. The chain crosses the membrane as a helical span at residues 389–409; sequence IIVAIAILLLIALILMTYFVI. Residues 410–426 are Cytoplasmic-facing; the sequence is RYKNRSIVNIKKLSLEN.

The protein belongs to the histidine acid phosphatase family.

The protein resides in the membrane. The enzyme catalyses a phosphate monoester + H2O = an alcohol + phosphate. This Caenorhabditis elegans protein is Putative acid phosphatase 1.